A 262-amino-acid polypeptide reads, in one-letter code: 5-methyltetrahydrofolate:corrinoid/iron-sulfur protein co-methyltransferase (262 aa).

In terms of domain architecture, Pterin-binding spans methionine 1 to leucine 246. (6S)-5-methyl-5,6,7,8-tetrahydrofolate contacts are provided by asparagine 96 and aspartate 160. Lysine 184 is a Ca(2+) binding site. Residues asparagine 199, glutamine 202, and arginine 207 each coordinate (6S)-5-methyl-5,6,7,8-tetrahydrofolate. A methylcob(III)alamin-binding site is contributed by glutamine 202–asparagine 203. Positions 222 and 224 each coordinate Ca(2+).

This sequence belongs to the vitamin-B12 dependent methionine synthase family. Heterohexamer composed of 2 subunits of AcsC, 2 subunits of AcsD and 2 subunits of AcsE. Ca(2+) is required as a cofactor.

The enzyme catalyses methyl-Co(III)-[corrinoid Fe-S protein] + (6S)-5,6,7,8-tetrahydrofolate = Co(I)-[corrinoid Fe-S protein] + (6S)-5-methyl-5,6,7,8-tetrahydrofolate + H(+). In terms of biological role, methyltransferase that mediates the transfer of a N5-methyl group of (6S)-methyltetrahydrofolate to the 5-methoxybenzimidazolylcobamide cofactor of a corrinoid/Fe-S protein (AcsC/AcsD) in the anaerobic acetyl-CoA pathway (Wood-Ljungdahl pathway) of carbon monoxide and carbon dioxide fixation. The chain is 5-methyltetrahydrofolate:corrinoid/iron-sulfur protein co-methyltransferase (acsE) from Moorella thermoacetica (Clostridium thermoaceticum).